A 249-amino-acid chain; its full sequence is Large ribosomal subunit protein uL10m (249 aa).

Residues M1–Y31 constitute a mitochondrion transit peptide. The segment at S226–K249 is disordered.

It belongs to the universal ribosomal protein uL10 family. Component of the mitochondrial large ribosomal subunit (mt-LSU). Mature yeast 74S mitochondrial ribosomes consist of a small (37S) and a large (54S) subunit. The 37S small subunit contains a 15S ribosomal RNA (15S mt-rRNA) and 34 different proteins. The 54S large subunit contains a 21S rRNA (21S mt-rRNA) and 46 different proteins.

The protein localises to the mitochondrion. Component of the mitochondrial ribosome (mitoribosome), a dedicated translation machinery responsible for the synthesis of mitochondrial genome-encoded proteins, including at least some of the essential transmembrane subunits of the mitochondrial respiratory chain. The mitoribosomes are attached to the mitochondrial inner membrane and translation products are cotranslationally integrated into the membrane. The protein is Large ribosomal subunit protein uL10m (MRPL11) of Saccharomyces cerevisiae (strain ATCC 204508 / S288c) (Baker's yeast).